The sequence spans 329 residues: Beta-ketoacyl-[acyl-carrier-protein] synthase III (329 aa).

Residues cysteine 123 and histidine 256 contribute to the active site. Residues 257–261 (QANIR) are ACP-binding. Residue asparagine 286 is part of the active site.

Belongs to the thiolase-like superfamily. FabH family. As to quaternary structure, homodimer.

Its subcellular location is the cytoplasm. It carries out the reaction malonyl-[ACP] + acetyl-CoA + H(+) = 3-oxobutanoyl-[ACP] + CO2 + CoA. It functions in the pathway lipid metabolism; fatty acid biosynthesis. Its function is as follows. Catalyzes the condensation reaction of fatty acid synthesis by the addition to an acyl acceptor of two carbons from malonyl-ACP. Catalyzes the first condensation reaction which initiates fatty acid synthesis and may therefore play a role in governing the total rate of fatty acid production. Possesses both acetoacetyl-ACP synthase and acetyl transacylase activities. Its substrate specificity determines the biosynthesis of branched-chain and/or straight-chain of fatty acids. The protein is Beta-ketoacyl-[acyl-carrier-protein] synthase III of Burkholderia cenocepacia (strain HI2424).